Reading from the N-terminus, the 464-residue chain is Cysteine--tRNA ligase (464 aa).

Cysteine 29 is a Zn(2+) binding site. Residues 31 to 41 carry the 'HIGH' region motif; sequence ATVQGDPHIGH. Residues cysteine 207, histidine 232, and glutamate 236 each contribute to the Zn(2+) site. Positions 263–267 match the 'KMSKS' region motif; sequence KMSKS. Position 266 (lysine 266) interacts with ATP.

Belongs to the class-I aminoacyl-tRNA synthetase family. Monomer. Zn(2+) serves as cofactor.

It is found in the cytoplasm. It catalyses the reaction tRNA(Cys) + L-cysteine + ATP = L-cysteinyl-tRNA(Cys) + AMP + diphosphate. The protein is Cysteine--tRNA ligase of Rhodococcus opacus (strain B4).